A 415-amino-acid chain; its full sequence is Putative serpin-Z6C (415 aa).

Positions 357 to 381 are RCL; that stretch reads GTEAAAATAVCLTFASAAPSSRRPA.

Belongs to the serpin family.

Functionally, probable serine protease inhibitor. The protein is Putative serpin-Z6C of Oryza sativa subsp. japonica (Rice).